A 565-amino-acid chain; its full sequence is DNA ligase B (565 aa).

The N6-AMP-lysine intermediate role is filled by Lys130.

It belongs to the NAD-dependent DNA ligase family. LigB subfamily.

The enzyme catalyses NAD(+) + (deoxyribonucleotide)n-3'-hydroxyl + 5'-phospho-(deoxyribonucleotide)m = (deoxyribonucleotide)n+m + AMP + beta-nicotinamide D-nucleotide.. Its function is as follows. Catalyzes the formation of phosphodiester linkages between 5'-phosphoryl and 3'-hydroxyl groups in double-stranded DNA using NAD as a coenzyme and as the energy source for the reaction. In Yersinia enterocolitica serotype O:8 / biotype 1B (strain NCTC 13174 / 8081), this protein is DNA ligase B.